The sequence spans 82 residues: Protein RALF-like 8 (82 aa).

An N-terminal signal peptide occupies residues 1-28 (MGMSKSIKVILSLALVVFLALAGTKVEA). 2 disulfides stabilise this stretch: Cys-47-Cys-55 and Cys-67-Cys-73.

This sequence belongs to the plant rapid alkalinization factor (RALF) family. As to expression, expressed in leaves and flowers.

It localises to the secreted. In terms of biological role, cell signaling peptide that may regulate plant stress, growth, and development. Mediates a rapid alkalinization of extracellular space by mediating a transient increase in the cytoplasmic Ca(2+) concentration leading to a calcium-dependent signaling events through a cell surface receptor and a concomitant activation of some intracellular mitogen-activated protein kinases. In Arabidopsis thaliana (Mouse-ear cress), this protein is Protein RALF-like 8 (RALFL8).